The chain runs to 211 residues: tRNA (guanine-N(7)-)-methyltransferase (211 aa).

S-adenosyl-L-methionine contacts are provided by glutamate 44, aspartate 69, aspartate 96, and aspartate 118. The active site involves aspartate 118. Lysine 122 lines the substrate pocket. An interaction with RNA region spans residues 124–129; that stretch reads RHEKRR. Substrate-binding positions include aspartate 154 and 191–194; that span reads TEYE.

The protein belongs to the class I-like SAM-binding methyltransferase superfamily. TrmB family.

It catalyses the reaction guanosine(46) in tRNA + S-adenosyl-L-methionine = N(7)-methylguanosine(46) in tRNA + S-adenosyl-L-homocysteine. Its pathway is tRNA modification; N(7)-methylguanine-tRNA biosynthesis. Catalyzes the formation of N(7)-methylguanine at position 46 (m7G46) in tRNA. The sequence is that of tRNA (guanine-N(7)-)-methyltransferase from Streptococcus mutans serotype c (strain ATCC 700610 / UA159).